The sequence spans 542 residues: Ribulokinase 2 (542 aa).

It belongs to the ribulokinase family.

It carries out the reaction D-ribulose + ATP = D-ribulose 5-phosphate + ADP + H(+). The enzyme catalyses L-ribulose + ATP = L-ribulose 5-phosphate + ADP + H(+). It participates in carbohydrate degradation; L-arabinose degradation via L-ribulose; D-xylulose 5-phosphate from L-arabinose (bacterial route): step 2/3. The polypeptide is Ribulokinase 2 (Staphylococcus saprophyticus subsp. saprophyticus (strain ATCC 15305 / DSM 20229 / NCIMB 8711 / NCTC 7292 / S-41)).